A 111-amino-acid polypeptide reads, in one-letter code: Resistin-like alpha (111 aa).

Residues 1 to 23 (MKTTTCSLLICISLLQLMVPVNT) form the signal peptide. 5 disulfide bridges follow: cysteine 55/cysteine 108, cysteine 67/cysteine 107, cysteine 76/cysteine 93, cysteine 78/cysteine 95, and cysteine 82/cysteine 97.

Belongs to the resistin/FIZZ family. As to quaternary structure, monomer. In terms of tissue distribution, highest levels in adipose tissue.

It is found in the secreted. In terms of biological role, probable hormone. Plays a role in pulmonary vascular remodeling. The protein is Resistin-like alpha (Retnla) of Mus musculus (Mouse).